A 256-amino-acid polypeptide reads, in one-letter code: Phosphoribosylaminoimidazole-succinocarboxamide synthase (256 aa).

It belongs to the SAICAR synthetase family.

The enzyme catalyses 5-amino-1-(5-phospho-D-ribosyl)imidazole-4-carboxylate + L-aspartate + ATP = (2S)-2-[5-amino-1-(5-phospho-beta-D-ribosyl)imidazole-4-carboxamido]succinate + ADP + phosphate + 2 H(+). It participates in purine metabolism; IMP biosynthesis via de novo pathway; 5-amino-1-(5-phospho-D-ribosyl)imidazole-4-carboxamide from 5-amino-1-(5-phospho-D-ribosyl)imidazole-4-carboxylate: step 1/2. The chain is Phosphoribosylaminoimidazole-succinocarboxamide synthase from Synechococcus sp. (strain JA-3-3Ab) (Cyanobacteria bacterium Yellowstone A-Prime).